We begin with the raw amino-acid sequence, 859 residues long: Probable helicase A859L (859 aa).

Positions tyrosine 178–alanine 349 constitute a Helicase ATP-binding domain. Position 191–198 (methionine 191–threonine 198) interacts with ATP. Positions aspartate 298 to histidine 301 match the DEAH box motif. The region spanning histidine 401–serine 553 is the Helicase C-terminal domain.

Belongs to the asfivirus helicase A859L family.

The chain is Probable helicase A859L from African swine fever virus (isolate Tick/South Africa/Pretoriuskop Pr4/1996) (ASFV).